A 101-amino-acid chain; its full sequence is MAKQSMIARDVKRAKLADKFYAKREELKKIISDANSSDEHRWAAVLKLQTLPRDSSPSRQRNRCRQTGRPHGVLRKFGLSRIKVREAAMRGEIPGLKKASW.

It belongs to the universal ribosomal protein uS14 family. In terms of assembly, part of the 30S ribosomal subunit. Contacts proteins S3 and S10.

Its function is as follows. Binds 16S rRNA, required for the assembly of 30S particles and may also be responsible for determining the conformation of the 16S rRNA at the A site. The polypeptide is Small ribosomal subunit protein uS14 (Actinobacillus pleuropneumoniae serotype 3 (strain JL03)).